Here is a 1120-residue protein sequence, read N- to C-terminus: Probable leucine-rich repeat receptor-like protein kinase At1g35710 (1120 aa).

The signal sequence occupies residues 1-29; it reads MGFAEKNLYDFRFLLFISIILSCSISASA. Residues 30–783 are Extracellular-facing; that stretch reads TIAEANALLK…RELKKPKKNG (754 aa). 4 N-linked (GlcNAc...) asparagine glycosylation sites follow: Asn46, Asn60, Asn83, and Asn124. 27 LRR repeats span residues 78–100, 103–125, 127–150, 151–172, 175–198, 199–221, 223–246, 247–269, 271–294, 295–317, 319–342, 343–365, 367–389, 391–412, 415–437, 439–461, 463–484, 487–510, 535–557, 559–581, 583–605, 607–630, 631–652, 655–677, 678–701, 702–723, and 726–748; these read SIEE…PFIS, NLAY…FGNL, KLIY…GNLK, NLTV…ELGN, SMTD…GNLK, NLMV…LGNM, NLMV…IGNM, SMTN…GNLK, NLTL…LGNI, SMID…GNLK, NLTI…LGNM, SMID…FGNL, NLTY…ELGN, SMIN…FGNF, KLES…VANS, HLTT…TVCK, KLQN…RDCK, DLNF…WEKS, KLGA…IWNM, QLVE…IGNL, NLSR…SFLT, NLES…TFDS, KLHD…SKLT, QLTQ…SSLQ, SLDK…TFEG, and ALTN…PTFR. An N-linked (GlcNAc...) asparagine glycan is attached at Asn151. A glycan (N-linked (GlcNAc...) asparagine) is linked at Asn295. The N-linked (GlcNAc...) asparagine glycan is linked to Asn343. Asn391, Asn436, Asn460, Asn473, and Asn490 each carry an N-linked (GlcNAc...) asparagine glycan. Asn569, Asn580, Asn604, Asn607, Asn641, and Asn660 each carry an N-linked (GlcNAc...) asparagine glycan. An N-linked (GlcNAc...) asparagine glycan is attached at Asn712. Residues 784–804 form a helical membrane-spanning segment; that stretch reads NLVVWILVPILGVLVILSICA. Over 805–1120 the chain is Cytoplasmic; sequence NTFTYCIRKR…TMLSISTTFS (316 aa). The residue at position 848 (Thr848) is a Phosphothreonine. The Protein kinase domain occupies 851-1120; sequence FDPTHLIGTG…TMLSISTTFS (270 aa). ATP-binding positions include 857–865 and Lys878; that span reads IGTGGYSKV. Tyr929 and Tyr968 each carry phosphotyrosine. The Proton acceptor role is filled by Asp981. Ser1014 carries the post-translational modification Phosphoserine. Tyr1022 and Tyr1029 each carry phosphotyrosine. Position 1030 is a phosphothreonine (Thr1030).

Belongs to the protein kinase superfamily. Ser/Thr protein kinase family.

Its subcellular location is the membrane. The catalysed reaction is L-seryl-[protein] + ATP = O-phospho-L-seryl-[protein] + ADP + H(+). It catalyses the reaction L-threonyl-[protein] + ATP = O-phospho-L-threonyl-[protein] + ADP + H(+). The sequence is that of Probable leucine-rich repeat receptor-like protein kinase At1g35710 from Arabidopsis thaliana (Mouse-ear cress).